The primary structure comprises 166 residues: Large ribosomal subunit protein uL10 (166 aa).

This sequence belongs to the universal ribosomal protein uL10 family. Part of the ribosomal stalk of the 50S ribosomal subunit. The N-terminus interacts with L11 and the large rRNA to form the base of the stalk. The C-terminus forms an elongated spine to which L12 dimers bind in a sequential fashion forming a multimeric L10(L12)X complex.

Forms part of the ribosomal stalk, playing a central role in the interaction of the ribosome with GTP-bound translation factors. The polypeptide is Large ribosomal subunit protein uL10 (Bacillus cereus (strain G9842)).